The following is a 103-amino-acid chain: Acylphosphatase-2 (103 aa).

At Ser-2 the chain carries N-acetylserine. Positions 13–103 (SVDYEVFGRV…LDFSGFSTRY (91 aa)) constitute an Acylphosphatase-like domain. The residue at position 26 (Cys-26) is an S-glutathionyl cysteine; alternate. Residues Arg-28 and Asn-46 contribute to the active site.

Belongs to the acylphosphatase family. In terms of assembly, monomer (TU1) or homodimer (TU3) in absence of reducing factors; disulfide linked.

The enzyme catalyses an acyl phosphate + H2O = a carboxylate + phosphate + H(+). Its physiological role is not yet clear. This Meleagris gallopavo (Wild turkey) protein is Acylphosphatase-2 (ACYP2).